A 249-amino-acid polypeptide reads, in one-letter code: Triosephosphate isomerase (249 aa).

The substrate site is built by Asn-12 and Lys-14. Lys-14 carries the N6-acetyllysine modification. Tyr-68 carries the post-translational modification 3'-nitrotyrosine. Residues Ser-80 and Ser-106 each carry the phosphoserine modification. Lys-142 participates in a covalent cross-link: Glycyl lysine isopeptide (Lys-Gly) (interchain with G-Cter in SUMO1). The residue at position 149 (Lys-149) is an N6-succinyllysine. At Lys-156 the chain carries N6-acetyllysine; alternate. Lys-156 bears the N6-succinyllysine; alternate mark. Ser-159 is subject to Phosphoserine. Residue Glu-166 is the Proton acceptor of the active site. Thr-173 is modified (phosphothreonine). An N6-acetyllysine; alternate modification is found at Lys-194. Lys-194 is subject to N6-succinyllysine; alternate. Lys-194 is modified (N6-methyllysine; alternate). Position 198 is a phosphoserine (Ser-198). At Tyr-209 the chain carries 3'-nitrotyrosine. Phosphoserine is present on Ser-212. Position 214 is a phosphothreonine (Thr-214). At Ser-223 the chain carries Phosphoserine. N6-acetyllysine is present on Lys-238.

Belongs to the triosephosphate isomerase family. As to quaternary structure, homodimer.

It is found in the cytoplasm. It carries out the reaction D-glyceraldehyde 3-phosphate = dihydroxyacetone phosphate. It catalyses the reaction dihydroxyacetone phosphate = methylglyoxal + phosphate. It participates in carbohydrate biosynthesis; gluconeogenesis. Its pathway is carbohydrate degradation; glycolysis; D-glyceraldehyde 3-phosphate from glycerone phosphate: step 1/1. Triosephosphate isomerase is an extremely efficient metabolic enzyme that catalyzes the interconversion between dihydroxyacetone phosphate (DHAP) and D-glyceraldehyde-3-phosphate (G3P) in glycolysis and gluconeogenesis. In terms of biological role, it is also responsible for the non-negligible production of methylglyoxal a reactive cytotoxic side-product that modifies and can alter proteins, DNA and lipids. The protein is Triosephosphate isomerase of Mesocricetus auratus (Golden hamster).